The primary structure comprises 299 residues: Protease HtpX homolog (299 aa).

2 consecutive transmembrane segments (helical) span residues 14–34 (IVLLIVFFMLLAAIGAAVGYL) and 39–59 (LVGGMAIALIIGFIYAFSMIF). A Zn(2+)-binding site is contributed by H143. E144 is an active-site residue. Zn(2+) is bound at residue H147. A run of 2 helical transmembrane segments spans residues 158–178 (IAVALASAVTLISSIGGRMMW) and 198–218 (IILLIFSLLAIILAPLAASLV). E227 is a binding site for Zn(2+).

The protein belongs to the peptidase M48B family. It depends on Zn(2+) as a cofactor.

Its subcellular location is the cell membrane. This is Protease HtpX homolog from Streptococcus mutans serotype c (strain ATCC 700610 / UA159).